Here is a 739-residue protein sequence, read N- to C-terminus: Catalase-peroxidase 2 (739 aa).

The first 26 residues, 1–26 (MKKTTIPTLSALTLAMSLAFGGAAIA), serve as a signal peptide directing secretion. Residues 105–227 (WHSAGVYRIF…MGATQMGLIY (123 aa)) constitute a cross-link (tryptophyl-tyrosyl-methioninium (Trp-Tyr) (with M-253)). Catalysis depends on His-106, which acts as the Proton acceptor. A cross-link (tryptophyl-tyrosyl-methioninium (Tyr-Met) (with W-105)) is located at residues 227–253 (YVNPEGPNGVPDPLASAKEIRDTFGRM). Position 268 (His-268) interacts with heme b.

It belongs to the peroxidase family. Peroxidase/catalase subfamily. Homodimer or homotetramer. It depends on heme b as a cofactor. Post-translationally, formation of the three residue Trp-Tyr-Met cross-link is important for the catalase, but not the peroxidase activity of the enzyme.

The catalysed reaction is H2O2 + AH2 = A + 2 H2O. It catalyses the reaction 2 H2O2 = O2 + 2 H2O. Bifunctional enzyme with both catalase and broad-spectrum peroxidase activity. The sequence is that of Catalase-peroxidase 2 from Shewanella sp. (strain MR-4).